The following is a 531-amino-acid chain: PHD finger protein 21B (531 aa).

Disordered stretches follow at residues Pro79–Gln99, Ser184–Pro222, Val238–Glu277, and Glu295–Ser314. Over residues Lys265–Glu277 the composition is skewed to basic and acidic residues. The PHD-type zinc finger occupies Asp352–Lys399. Positions Lys423–Lys465 form a coiled coil. The tract at residues Leu507–Asn531 is disordered. Residues Pro522 to Asn531 show a composition bias toward polar residues.

This is PHD finger protein 21B (PHF21B) from Homo sapiens (Human).